Reading from the N-terminus, the 206-residue chain is Imidazole glycerol phosphate synthase subunit hisH (206 aa).

Positions lysine 2 to leucine 206 constitute a Glutamine amidotransferase type-1 domain. Cysteine 80 (nucleophile) is an active-site residue. Residues histidine 184 and glutamate 186 contribute to the active site.

Heterodimer of hisH and hisF.

The protein resides in the plastid. Its subcellular location is the chloroplast. It catalyses the reaction 5-[(5-phospho-1-deoxy-D-ribulos-1-ylimino)methylamino]-1-(5-phospho-beta-D-ribosyl)imidazole-4-carboxamide + L-glutamine = D-erythro-1-(imidazol-4-yl)glycerol 3-phosphate + 5-amino-1-(5-phospho-beta-D-ribosyl)imidazole-4-carboxamide + L-glutamate + H(+). The enzyme catalyses L-glutamine + H2O = L-glutamate + NH4(+). Its pathway is amino-acid biosynthesis; L-histidine biosynthesis; L-histidine from 5-phospho-alpha-D-ribose 1-diphosphate: step 5/9. Its function is as follows. IGPS catalyzes the conversion of PRFAR and glutamine to IGP, AICAR and glutamate. The HisH subunit catalyzes the hydrolysis of glutamine to glutamate and ammonia as part of the synthesis of IGP and AICAR. The resulting ammonia molecule is channeled to the active site of HisF. The sequence is that of Imidazole glycerol phosphate synthase subunit hisH from Cyanidioschyzon merolae (strain NIES-3377 / 10D) (Unicellular red alga).